The following is an 855-amino-acid chain: Cell surface glycoprotein (855 aa).

Positions 1 to 22 are cleaved as a signal peptide; the sequence is MTANKQVRAVLLAALMVFSVFA. N-linked (GlcNAc...) asparagine glycans are attached at residues asparagine 78, asparagine 83, asparagine 108, asparagine 167, asparagine 174, asparagine 187, asparagine 203, asparagine 227, asparagine 230, asparagine 313, asparagine 363, asparagine 441, asparagine 548, asparagine 588, asparagine 608, asparagine 620, asparagine 642, asparagine 656, and asparagine 754. A compositionally biased stretch (low complexity) spans 782-802; that stretch reads ETTTAAETTTTEESTETTTTE. Positions 782-831 are disordered; sequence ETTTAAETTTTEESTETTTTEESTEEPTETATATEEPTEEATEETTESST. Over residues 817 to 827 the composition is skewed to acidic residues; sequence EPTEEATEETT. The helical transmembrane segment at 831-851 threads the bilayer; that stretch reads TPGFGVVVALVALVAAALLAV. The PGF sorting signal motif lies at 832-834; that stretch reads PGF.

It belongs to the halobacterial S-layer protein family. Post-translationally, glycosylated. In terms of processing, cleaved by the archaeosortase ArtA at the C-terminus, with removal of a short hydrophobic segment. Lipidation.

It is found in the secreted. Its subcellular location is the cell wall. The protein resides in the S-layer. It localises to the cell membrane. S-layer protein. The S-layer is a paracrystalline mono-layered assembly of proteins which coats the surface of the cell. This is Cell surface glycoprotein from Haloferax gibbonsii.